Here is a 153-residue protein sequence, read N- to C-terminus: UPF0260 protein YcgN (153 aa).

This sequence belongs to the UPF0260 family.

The chain is UPF0260 protein YcgN from Salmonella typhi.